We begin with the raw amino-acid sequence, 371 residues long: S-adenosylmethionine:tRNA ribosyltransferase-isomerase (371 aa).

The protein belongs to the QueA family. As to quaternary structure, monomer.

Its subcellular location is the cytoplasm. The catalysed reaction is 7-aminomethyl-7-carbaguanosine(34) in tRNA + S-adenosyl-L-methionine = epoxyqueuosine(34) in tRNA + adenine + L-methionine + 2 H(+). It functions in the pathway tRNA modification; tRNA-queuosine biosynthesis. Its function is as follows. Transfers and isomerizes the ribose moiety from AdoMet to the 7-aminomethyl group of 7-deazaguanine (preQ1-tRNA) to give epoxyqueuosine (oQ-tRNA). The protein is S-adenosylmethionine:tRNA ribosyltransferase-isomerase of Rickettsia akari (strain Hartford).